A 53-amino-acid chain; its full sequence is ATP synthase F(0) complex subunit 8 (53 aa).

Residues proline 8–leucine 24 traverse the membrane as a helical segment.

It belongs to the ATPase protein 8 family. In terms of assembly, component of the ATP synthase complex composed at least of ATP5F1A/subunit alpha, ATP5F1B/subunit beta, ATP5MC1/subunit c (homooctomer), MT-ATP6/subunit a, MT-ATP8/subunit 8, ATP5ME/subunit e, ATP5MF/subunit f, ATP5MG/subunit g, ATP5MK/subunit k, ATP5MJ/subunit j, ATP5F1C/subunit gamma, ATP5F1D/subunit delta, ATP5F1E/subunit epsilon, ATP5PF/subunit F6, ATP5PB/subunit b, ATP5PD/subunit d, ATP5PO/subunit OSCP. ATP synthase complex consists of a soluble F(1) head domain (subunits alpha(3) and beta(3)) - the catalytic core - and a membrane F(0) domain - the membrane proton channel (subunits c, a, 8, e, f, g, k and j). These two domains are linked by a central stalk (subunits gamma, delta, and epsilon) rotating inside the F1 region and a stationary peripheral stalk (subunits F6, b, d, and OSCP).

It localises to the mitochondrion membrane. Its function is as follows. Subunit 8, of the mitochondrial membrane ATP synthase complex (F(1)F(0) ATP synthase or Complex V) that produces ATP from ADP in the presence of a proton gradient across the membrane which is generated by electron transport complexes of the respiratory chain. ATP synthase complex consist of a soluble F(1) head domain - the catalytic core - and a membrane F(1) domain - the membrane proton channel. These two domains are linked by a central stalk rotating inside the F(1) region and a stationary peripheral stalk. During catalysis, ATP synthesis in the catalytic domain of F(1) is coupled via a rotary mechanism of the central stalk subunits to proton translocation. In vivo, can only synthesize ATP although its ATP hydrolase activity can be activated artificially in vitro. Part of the complex F(0) domain. The sequence is that of ATP synthase F(0) complex subunit 8 from Alligator mississippiensis (American alligator).